Reading from the N-terminus, the 210-residue chain is MTKVAKKIAKDLLDIEAVFLNPNEPFTWASGIKSPIYCDNRITMSYPAVRKEIAEGLAAKIKETFPEVEVIAGTATAGIPHAAWVADILGLPMVYIRSKAKDHGKGNQIEGRISEGQKMVVIEDLISTGGSVLEAAEAAEREGATVLGVAAIFTYELPKGTANFADKQMTLLTLTNYSTLIDAALEANYIEEKDVTLLQEWKKDPENWGK.

5-phospho-alpha-D-ribose 1-diphosphate is bound by residues Arg-97, Lys-101, His-103, and 123-131 (EDLISTGGS). Ser-127 serves as a coordination point for orotate.

It belongs to the purine/pyrimidine phosphoribosyltransferase family. PyrE subfamily. In terms of assembly, homodimer. Requires Mg(2+) as cofactor.

It carries out the reaction orotidine 5'-phosphate + diphosphate = orotate + 5-phospho-alpha-D-ribose 1-diphosphate. It participates in pyrimidine metabolism; UMP biosynthesis via de novo pathway; UMP from orotate: step 1/2. Catalyzes the transfer of a ribosyl phosphate group from 5-phosphoribose 1-diphosphate to orotate, leading to the formation of orotidine monophosphate (OMP). The protein is Orotate phosphoribosyltransferase of Enterococcus faecalis (strain ATCC 700802 / V583).